Reading from the N-terminus, the 143-residue chain is Transcriptional regulator MraZ (143 aa).

SpoVT-AbrB domains lie at 5 to 47 (TYTP…PRAE) and 76 to 119 (TDEQ…DAQA).

Belongs to the MraZ family. In terms of assembly, forms oligomers.

Its subcellular location is the cytoplasm. It is found in the nucleoid. The polypeptide is Transcriptional regulator MraZ (Mycobacterium avium (strain 104)).